We begin with the raw amino-acid sequence, 46 residues long: Sperm protamine P1 (46 aa).

Belongs to the protamine P1 family. In terms of tissue distribution, testis.

It is found in the nucleus. The protein localises to the chromosome. Its function is as follows. Protamines substitute for histones in the chromatin of sperm during the haploid phase of spermatogenesis. They compact sperm DNA into a highly condensed, stable and inactive complex. The chain is Sperm protamine P1 (PRM1) from Glauconycteris beatrix (Beatrix's bat).